We begin with the raw amino-acid sequence, 1411 residues long: Regulating synaptic membrane exocytosis protein 2 (1411 aa).

The segment at 1 to 33 (MSAPVGPRGRLAPIPAASQPPLQPEMPDLSHLT) is disordered. Residues 26–185 (MPDLSHLTEE…TKSGAWFYNS (160 aa)) form the RabBD domain. The FYVE-type zinc finger occupies 117 to 173 (KGDAPTCGICHKTKFADGCGHNCSYCQTKFCARCGGRVSLRSNKVMWVCNLCRKQQE). Zn(2+) is bound by residues Cys-123, Cys-126, Cys-139, Cys-142, Cys-147, Cys-150, Cys-165, and Cys-168. 6 stretches are compositionally biased toward basic and acidic residues: residues 203 to 216 (NEEA…KLHE), 273 to 287 (DQNR…REEY), 318 to 329 (DSDHLSYRDSNR), 348 to 366 (RDEY…RYRS), 382 to 401 (EQMR…RHSD), and 410 to 434 (EDSR…RRAA). Disordered regions lie at residues 203–598 (NEEA…SERQ) and 623–650 (SGVD…WQPS). The residue at position 400 (Ser-400) is a Phosphoserine. Over residues 451 to 463 (GPSSYAQRTTNHS) the composition is skewed to polar residues. A compositionally biased stretch (basic and acidic residues) spans 475–492 (DRPDLRRTDSLRKQHHLD). A compositionally biased stretch (polar residues) spans 510 to 521 (RNDSLSSDQSES). Basic residues predominate over residues 528–537 (KPHKSKKGGK). A compositionally biased stretch (acidic residues) spans 558-568 (SCDDVEIESES). Basic and acidic residues-rich tracts occupy residues 569 to 583 (VSEK…RKTS) and 634 to 644 (NEEHSHSDKHP). The region spanning 668–754 (DGSVPRDSGA…EPQVELVVSR (87 aa)) is the PDZ domain. Thr-689 carries the post-translational modification Phosphothreonine. Residues 762–793 (IPDSTHAQLESSSSSFESQKMDRPSISVTSPM) form a disordered region. 2 positions are modified to phosphoserine: Ser-791 and Ser-794. Residues 805–928 (LSGQLSIKLW…ALLDDEPHWY (124 aa)) form the C2 1 domain. 2 disordered regions span residues 939-973 (PLPH…SEVS) and 993-1190 (DLQS…STET). Polar residues-rich tracts occupy residues 994-1015 (LQSS…SPSG) and 1049-1059 (RTMTGHYNTIS). Residues 1060–1113 (RMDRHRVMDDHYSPDRDRDCEAADRQPYHRSRSTEQRPLLERTTTRSRSTERPD) are compositionally biased toward basic and acidic residues. Residues 1143 to 1153 (GSVQTSPSSTP) show a composition bias toward polar residues. Ser-1148 carries the post-translational modification Phosphoserine. The region spanning 1257 to 1375 (AMGDIQVGMM…ELSNMVIGWF (119 aa)) is the C2 2 domain. A phosphoserine mark is found at Ser-1396 and Ser-1399.

Interacts with RAB3A and RAB3B that have been activated by GTP-binding. Interacts with RAB3C, RAB3D and RAB26. Interacts with TSPOAP1 and RIMBP2. Interacts with PPFIA3 and PPFIA4. Interacts via its zinc finger with the first C2 domain of UNC13A. Forms a complex consisting of UNC13A, RIMS2 and RAB3A. Heterodimer with PCLO. Part of a ternary complex involving PCLO and EPAC2. Widely expressed. Expressed in melanocytes. In fetal tissues, predominantly expressed in the brain. In the retina, expressed in the outer plexiform layer (at protein level). In the cerebellum, expressed in Purkinje cells (at protein level). In the pancreas, expressed in Langerhans islets (at protein level).

Its subcellular location is the cell membrane. It localises to the synapse. The protein resides in the presynaptic cell membrane. Functionally, rab effector involved in exocytosis. May act as scaffold protein. Plays a role in dendrite formation by melanocytes. This is Regulating synaptic membrane exocytosis protein 2 (RIMS2) from Homo sapiens (Human).